The sequence spans 558 residues: uncharacterized protein (558 aa).

5 consecutive transmembrane segments (helical) span residues 15–32 (PSVT…ALGL), 39–61 (IGTI…HFGV), 76–95 (LVIF…FPSL), 104–126 (LISL…ILGI), and 166–188 (MALA…LALL). 2 RCK C-terminal domains span residues 196 to 278 (EERD…LFGK) and 286 to 370 (RPDI…ILGD). The next 5 helical transmembrane spans lie at 383–405 (LFGG…GVSM), 409–426 (LGLA…GAFG), 446–468 (FGII…DTII), 473–495 (LLWV…WASI), and 533–555 (VVYA…IMIL).

It belongs to the AAE transporter (TC 2.A.81) family.

Its subcellular location is the cell membrane. This is an uncharacterized protein from Porphyromonas gingivalis (strain ATCC BAA-308 / W83).